A 964-amino-acid chain; its full sequence is Protein translocase subunit SecA (964 aa).

Residues Gln86, Gly104 to Thr108, and Asp494 each bind ATP. The tract at residues Ala848–Lys964 is disordered. The span at Ala871–Thr882 shows a compositional bias: acidic residues. The segment covering Ala889 to Ser900 has biased composition (low complexity). Positions 947, 949, 958, and 959 each coordinate Zn(2+).

It belongs to the SecA family. Monomer and homodimer. Part of the essential Sec protein translocation apparatus which comprises SecA, SecYEG and auxiliary proteins SecDF. Other proteins may also be involved. It depends on Zn(2+) as a cofactor.

It is found in the cell membrane. The protein localises to the cytoplasm. It carries out the reaction ATP + H2O + cellular proteinSide 1 = ADP + phosphate + cellular proteinSide 2.. Its function is as follows. Part of the Sec protein translocase complex. Interacts with the SecYEG preprotein conducting channel. Has a central role in coupling the hydrolysis of ATP to the transfer of proteins into and across the cell membrane, serving as an ATP-driven molecular motor driving the stepwise translocation of polypeptide chains across the membrane. The chain is Protein translocase subunit SecA from Bifidobacterium longum (strain NCC 2705).